Reading from the N-terminus, the 109-residue chain is Small ribosomal subunit protein bS6 (109 aa).

This sequence belongs to the bacterial ribosomal protein bS6 family.

Binds together with bS18 to 16S ribosomal RNA. This Anaplasma phagocytophilum (strain HZ) protein is Small ribosomal subunit protein bS6.